The following is a 764-amino-acid chain: Probable glutamate--tRNA ligase, cytoplasmic (764 aa).

228–230 serves as a coordination point for L-glutamate; the sequence is RFP. Positions 233-242 match the 'HIGH' region motif; the sequence is PSGYMHIGHC. Position 238 (His-238) interacts with ATP. L-glutamate contacts are provided by residues Asp-264, 404–408, and Arg-422; that span reads YDFAC. Residues Glu-425 and 460–464 each bind ATP; that span reads LLSKR. The 'KMSKS' region signature appears at 460-464; it reads LLSKR.

The protein belongs to the class-I aminoacyl-tRNA synthetase family. Glutamate--tRNA ligase type 2 subfamily.

The protein resides in the cytoplasm. It catalyses the reaction tRNA(Glu) + L-glutamate + ATP = L-glutamyl-tRNA(Glu) + AMP + diphosphate. In terms of biological role, catalyzes the attachment of glutamate to tRNA(Glu) in a two-step reaction: glutamate is first activated by ATP to form Glu-AMP and then transferred to the acceptor end of tRNA(Glu). The polypeptide is Probable glutamate--tRNA ligase, cytoplasmic (gluS) (Dictyostelium discoideum (Social amoeba)).